Reading from the N-terminus, the 870-residue chain is Aminopeptidase N (870 aa).

Residues Glu-121 and 261-265 (GAMEN) each bind substrate. His-297 is a Zn(2+) binding site. Glu-298 functions as the Proton acceptor in the catalytic mechanism. Zn(2+) contacts are provided by His-301 and Glu-320.

It belongs to the peptidase M1 family. Zn(2+) serves as cofactor.

The protein localises to the cell inner membrane. The enzyme catalyses Release of an N-terminal amino acid, Xaa-|-Yaa- from a peptide, amide or arylamide. Xaa is preferably Ala, but may be most amino acids including Pro (slow action). When a terminal hydrophobic residue is followed by a prolyl residue, the two may be released as an intact Xaa-Pro dipeptide.. In terms of biological role, aminopeptidase N is involved in the degradation of intracellular peptides generated by protein breakdown during normal growth as well as in response to nutrient starvation. In Escherichia coli (strain K12), this protein is Aminopeptidase N (pepN).